The chain runs to 356 residues: uncharacterized protein (356 aa).

6 helical membrane passes run 7 to 29 (LLSR…VSLY), 49 to 71 (YFLN…ISLI), 91 to 113 (ISPL…TFLL), 270 to 292 (LFYR…YLFF), 299 to 316 (QVIP…LVIL), and 329 to 348 (VLYS…KGVY).

The protein localises to the cell membrane. This is an uncharacterized protein from Aquifex aeolicus (strain VF5).